We begin with the raw amino-acid sequence, 312 residues long: Homoserine kinase (312 aa).

Pro94–Ala104 is an ATP binding site.

It belongs to the GHMP kinase family. Homoserine kinase subfamily.

It is found in the cytoplasm. It carries out the reaction L-homoserine + ATP = O-phospho-L-homoserine + ADP + H(+). Its pathway is amino-acid biosynthesis; L-threonine biosynthesis; L-threonine from L-aspartate: step 4/5. Functionally, catalyzes the ATP-dependent phosphorylation of L-homoserine to L-homoserine phosphate. This Caldanaerobacter subterraneus subsp. tengcongensis (strain DSM 15242 / JCM 11007 / NBRC 100824 / MB4) (Thermoanaerobacter tengcongensis) protein is Homoserine kinase.